The following is a 346-amino-acid chain: N-acetyl-gamma-glutamyl-phosphate reductase (346 aa).

C150 is an active-site residue.

This sequence belongs to the NAGSA dehydrogenase family. Type 1 subfamily.

Its subcellular location is the cytoplasm. It catalyses the reaction N-acetyl-L-glutamate 5-semialdehyde + phosphate + NADP(+) = N-acetyl-L-glutamyl 5-phosphate + NADPH + H(+). It functions in the pathway amino-acid biosynthesis; L-arginine biosynthesis; N(2)-acetyl-L-ornithine from L-glutamate: step 3/4. Its function is as follows. Catalyzes the NADPH-dependent reduction of N-acetyl-5-glutamyl phosphate to yield N-acetyl-L-glutamate 5-semialdehyde. This is N-acetyl-gamma-glutamyl-phosphate reductase from Desulforamulus reducens (strain ATCC BAA-1160 / DSM 100696 / MI-1) (Desulfotomaculum reducens).